A 401-amino-acid chain; its full sequence is Probable aspartic-type endopeptidase TRV_05382 (401 aa).

Positions 1-22 (MWHSPFFTAFTLFLGFFTLTLA) are cleaved as a signal peptide. N-linked (GlcNAc...) asparagine glycans are attached at residues N80 and N102. The Peptidase A1 domain occupies 94 to 398 (FVNEITIGNN…DHDGPKMGFA (305 aa)). Residue D110 is part of the active site. N282 is a glycosylation site (N-linked (GlcNAc...) asparagine). The active site involves D292. N329 carries N-linked (GlcNAc...) asparagine glycosylation.

Belongs to the peptidase A1 family.

It is found in the secreted. Functionally, probable aspartic-type endopeptidase which contributes to virulence. The protein is Probable aspartic-type endopeptidase TRV_05382 of Trichophyton verrucosum (strain HKI 0517).